The following is a 1212-amino-acid chain: DNA-directed RNA polymerase subunit beta' (1212 aa).

Zn(2+) contacts are provided by Cys-60, Cys-62, Cys-75, and Cys-78. Asp-450, Asp-452, and Asp-454 together coordinate Mg(2+). Residues Cys-819, Cys-893, Cys-900, and Cys-903 each contribute to the Zn(2+) site.

This sequence belongs to the RNA polymerase beta' chain family. In terms of assembly, the RNAP catalytic core consists of 2 alpha, 1 beta, 1 beta' and 1 omega subunit. When a sigma factor is associated with the core the holoenzyme is formed, which can initiate transcription. Requires Mg(2+) as cofactor. Zn(2+) is required as a cofactor.

The enzyme catalyses RNA(n) + a ribonucleoside 5'-triphosphate = RNA(n+1) + diphosphate. Functionally, DNA-dependent RNA polymerase catalyzes the transcription of DNA into RNA using the four ribonucleoside triphosphates as substrates. The sequence is that of DNA-directed RNA polymerase subunit beta' from Streptococcus uberis (strain ATCC BAA-854 / 0140J).